The following is a 104-amino-acid chain: Protein EPIDERMAL PATTERNING FACTOR 1 (104 aa).

An N-terminal signal peptide occupies residues 1–20 (MKSLLLLAFFLSFFFGSLLA). 4 disulfide bridges follow: cysteine 60–cysteine 94, cysteine 64–cysteine 70, cysteine 67–cysteine 96, and cysteine 79–cysteine 88. Asparagine 98 is a glycosylation site (N-linked (GlcNAc...) asparagine).

This sequence belongs to the plant cysteine rich small secretory peptide family. Epidermal patterning factor subfamily. Interacts with ERECTA and ERL1, but not with TMM. In terms of tissue distribution, expressed in shoots, but not in roots. Mostly localized in developing leaves, specifically in meristemoids, guard mother cells (GMCs), and young guard cells.

The protein localises to the secreted. Functionally, controls stomatal patterning. Regulates asymmetric cell division during guard cell differentiation. Mediates stomatal development inhibition. Not cleaved by the protease CRSP (AC Q9LNU1). MEPF1: mobile signal controlling stomatal development in a non-cell-autonomous manner. Uses ERL1 as major receptor. May act by competing with somatogen (AC Q9SV72) for the same receptor, TMM (AC Q9SSD1). The polypeptide is Protein EPIDERMAL PATTERNING FACTOR 1 (Arabidopsis thaliana (Mouse-ear cress)).